Reading from the N-terminus, the 36-residue chain is Ostricacin-1 (36 aa).

3 disulfide bridges follow: Cys3/Cys29, Cys8/Cys23, and Cys13/Cys30.

The protein resides in the secreted. Its function is as follows. Has antibacterial activity against the Gram-positive bacteria S.aureus 1056 MRSA (MIC=1.25 ug/ml) and S.aureus NCTC 4163 (MIC=6.7 ug/ml), and the Gram-negative bacteria E.coli O157:H7 (MIC=0.96 ug/ml) and E.coli 0111 (MIC=6.7 ug/ml). Does not have antifungal activity against the yeast C.albicans 3153A. The protein is Ostricacin-1 of Struthio camelus (Common ostrich).